Reading from the N-terminus, the 211-residue chain is MTKVLFITANPNSAEGSFGMAVGEAFIEAYKNEHPQDEVVTIDLFNTTVPAIDADVFAAWGKFAAGEGFEALTEAQQQKVAAMNTNLETFMHADRYVFVTPMWNFSYPPVVKAYLDNLAIAGKTFKYTENGPVGLLEGKKALHIQATGGVYSEGAYAAVDFGRNHLKTVLGFIGVNETEYIAVEGMNANPEKAQEIKEAAIANARELAKRF.

Residue 102–105 coordinates FMN; that stretch reads MWNF.

It belongs to the azoreductase type 1 family. Homodimer. Requires FMN as cofactor.

The enzyme catalyses 2 a quinone + NADH + H(+) = 2 a 1,4-benzosemiquinone + NAD(+). It carries out the reaction N,N-dimethyl-1,4-phenylenediamine + anthranilate + 2 NAD(+) = 2-(4-dimethylaminophenyl)diazenylbenzoate + 2 NADH + 2 H(+). Quinone reductase that provides resistance to thiol-specific stress caused by electrophilic quinones. In terms of biological role, also exhibits azoreductase activity. Catalyzes the reductive cleavage of the azo bond in aromatic azo compounds to the corresponding amines. The polypeptide is FMN-dependent NADH:quinone oxidoreductase 3 (Bacillus cereus (strain ATCC 10987 / NRS 248)).